The following is a 271-amino-acid chain: Proteasome inhibitor PI31 subunit (271 aa).

Alanine 2 is modified (N-acetylalanine). The segment at 2-150 (AGLEVLFASA…PIHEQWEKAR (149 aa)) is important for homodimerization and interaction with FBXO7. A phosphoserine mark is found at serine 153 and serine 189. Omega-N-methylarginine is present on arginine 205. Arginine 219 is subject to Asymmetric dimethylarginine. The disordered stretch occupies residues 226–271 (SGLPNRLPPGAVPPGARFDPFGPIGTSPSGPNPDHLPPPGYDDMYL). Arginine 231 bears the Omega-N-methylarginine mark. Position 252 is a phosphoserine (serine 252). Residues 255–265 (GPNPDHLPPPG) are compositionally biased toward pro residues.

The protein belongs to the proteasome inhibitor PI31 family. In terms of assembly, monomer and homodimer. Interacts with FBXO7.

It is found in the cytoplasm. It localises to the endoplasmic reticulum. Its function is as follows. Plays an important role in control of proteasome function. Inhibits the hydrolysis of protein and peptide substrates by the 20S proteasome. Also inhibits the activation of the proteasome by the proteasome regulatory proteins PA700 and PA28. The protein is Proteasome inhibitor PI31 subunit (Psmf1) of Mus musculus (Mouse).